Here is a 235-residue protein sequence, read N- to C-terminus: MYSVTINQRVEAIKNNEEEINLFVEEYKPFIAACTQKVVGRYVAYGQDDELSIALMAFVETIRSYDVSKGNFLSFSQNVIKRRIIDYYRKEKKHSVVVNINGHLEDEEEETDLGIAMSIDKYSEEEISEYRRLELEQLKKELKEWDISFFDLVNISPKHKRTKKIYSKIIKFVLSRPDIMEKIKQKKYLPVAEIEQSLKIPRKTIERARKYIITVVIIFTGDYEFIRDYVNWEVE.

A Polymerase core binding motif is present at residues 49 to 62 (DELSIALMAFVETI). The segment at residues 191-210 (VAEIEQSLKIPRKTIERARK) is a DNA-binding region (H-T-H motif).

The protein belongs to the sigma-70 factor family. SigI subfamily. As to quaternary structure, interacts with RsgI7.

It is found in the cytoplasm. Its activity is regulated as follows. Negatively regulated by the anti-sigma-I factor RsgI7. Its function is as follows. Sigma factors are initiation factors that promote the attachment of RNA polymerase to specific initiation sites and are then released. The chain is RNA polymerase sigma factor SigI7 from Acetivibrio thermocellus (strain ATCC 27405 / DSM 1237 / JCM 9322 / NBRC 103400 / NCIMB 10682 / NRRL B-4536 / VPI 7372) (Clostridium thermocellum).